The primary structure comprises 274 residues: Penicillin-insensitive murein endopeptidase (274 aa).

Positions 1–19 (MNKTAIALLALLASSASLA) are cleaved as a signal peptide. Cystine bridges form between Cys-44/Cys-265, Cys-187/Cys-235, and Cys-216/Cys-223. His-110, His-113, Asp-120, Asp-147, His-150, and His-211 together coordinate Zn(2+). Residues 228–264 (LPPPGDGCGAELQSWFAPPKPGTTKPEKKTPSPLPPS) form a disordered region.

The protein belongs to the peptidase M74 family. In terms of assembly, dimer. The cofactor is Zn(2+).

Its subcellular location is the periplasm. Its function is as follows. Murein endopeptidase that cleaves the D-alanyl-meso-2,6-diamino-pimelyl amide bond that connects peptidoglycan strands. Likely plays a role in the removal of murein from the sacculus. The protein is Penicillin-insensitive murein endopeptidase of Escherichia coli (strain 55989 / EAEC).